The following is a 137-amino-acid chain: Large ribosomal subunit protein bL17 (137 aa).

This sequence belongs to the bacterial ribosomal protein bL17 family. In terms of assembly, part of the 50S ribosomal subunit. Contacts protein L32.

The chain is Large ribosomal subunit protein bL17 from Rickettsia typhi (strain ATCC VR-144 / Wilmington).